The following is a 363-amino-acid chain: Protein-glutamate methylesterase/protein-glutamine glutaminase of group 3 operon (363 aa).

In terms of domain architecture, Response regulatory spans 7–124; that stretch reads RVLIVDDSAS…RQALMESSGR (118 aa). 4-aspartylphosphate is present on Asp-58. The region spanning 166 to 357 is the CheB-type methylesterase domain; that stretch reads PTTERIVCIG…REIMAWQQAK (192 aa). Residues Ser-177, His-203, and Asp-299 contribute to the active site.

Belongs to the CheB family. In terms of processing, phosphorylated by CheA. Phosphorylation of the N-terminal regulatory domain activates the methylesterase activity.

It localises to the cytoplasm. It catalyses the reaction [protein]-L-glutamate 5-O-methyl ester + H2O = L-glutamyl-[protein] + methanol + H(+). The catalysed reaction is L-glutaminyl-[protein] + H2O = L-glutamyl-[protein] + NH4(+). Its function is as follows. Involved in chemotaxis. Part of a chemotaxis signal transduction system that modulates chemotaxis in response to various stimuli. Catalyzes the demethylation of specific methylglutamate residues introduced into the chemoreceptors (methyl-accepting chemotaxis proteins or MCP) by CheR. Also mediates the irreversible deamidation of specific glutamine residues to glutamic acid. This is Protein-glutamate methylesterase/protein-glutamine glutaminase of group 3 operon from Rhodopseudomonas palustris (strain ATCC BAA-98 / CGA009).